The following is a 630-amino-acid chain: Mesothelin (630 aa).

The N-terminal stretch at 1 to 36 is a signal peptide; it reads MALPTARPLLGSCGTPALGSLLFLLFSLGWVQPSRT. The N-linked (GlcNAc...) asparagine glycan is linked to Asn57. A Phosphoserine; by FAM20C modification is found at Ser200. Positions 262–286 are required for megakaryocyte-potentiating factor activity; it reads SIPQGIVAAWRQRSSRDPSWRQPER. Cys302 and Cys326 are disulfide-bonded. N-linked (GlcNAc...) asparagine glycans are attached at residues Asn388, Asn496, and Asn523. Residue Ser606 is the site of GPI-anchor amidated serine attachment. Residues 607 to 630 constitute a propeptide, removed in mature form; sequence GTPCLLGPGPVLTVLALLLASTLA.

This sequence belongs to the mesothelin family. In terms of assembly, interacts with MUC16. In terms of processing, both MPF and the cleaved form of mesothelin are N-glycosylated. Post-translationally, proteolytically cleaved by a furin-like convertase to generate megakaryocyte-potentiating factor (MPF), and the cleaved form of mesothelin. As to expression, expressed in lung. Expressed at low levels in heart, placenta and kidney. Expressed in mesothelial cells. Highly expressed in mesotheliomas, ovarian cancers, and some squamous cell carcinomas (at protein level).

The protein localises to the cell membrane. It localises to the golgi apparatus. It is found in the secreted. Membrane-anchored forms may play a role in cellular adhesion. Its function is as follows. Megakaryocyte-potentiating factor (MPF) potentiates megakaryocyte colony formation in vitro. In Homo sapiens (Human), this protein is Mesothelin (MSLN).